The following is a 144-amino-acid chain: INO80 complex subunit 5 (144 aa).

The disordered stretch occupies residues 1–58; the sequence is MAAQKKQGERVLPARSTRKRRQLPDMLYYDERTDSYVTPQERSLSEANAQTRPAPNTI. Residues 35–58 are compositionally biased toward polar residues; the sequence is SYVTPQERSLSEANAQTRPAPNTI.

In terms of assembly, component of the INO80 chromatin remodeling complex.

The protein resides in the nucleus. Its function is as follows. Component of the INO80 complex which remodels chromatin by shifting nucleosomes and is involved in DNA repair. The polypeptide is INO80 complex subunit 5 (iec5) (Schizosaccharomyces pombe (strain 972 / ATCC 24843) (Fission yeast)).